Here is a 218-residue protein sequence, read N- to C-terminus: Glutathione S-transferase Mu 1 (218 aa).

In terms of domain architecture, GST N-terminal spans 2 to 88 (PMTLGYWDVR…YLARKHGLCG (87 aa)). Glutathione-binding positions include 7–8 (YW), 46–50 (WLSEK), 59–60 (NL), and 72–73 (QS). The 119-residue stretch at 90 to 208 (TEEERIRVDI…KSSRFIRVPV (119 aa)) folds into the GST C-terminal domain. Tyr-116 is a binding site for substrate.

This sequence belongs to the GST superfamily. Mu family. In terms of assembly, homodimer. Well expressed in rabbit liver, brain and kidney.

Its subcellular location is the cytoplasm. The catalysed reaction is RX + glutathione = an S-substituted glutathione + a halide anion + H(+). Its function is as follows. Conjugation of reduced glutathione to a wide number of exogenous and endogenous hydrophobic electrophiles. The protein is Glutathione S-transferase Mu 1 of Oryctolagus cuniculus (Rabbit).